We begin with the raw amino-acid sequence, 226 residues long: Ribonuclease 3 (226 aa).

Residues 7-129 (LPRLCRTLGY…IIGAVYLDSD (123 aa)) form the RNase III domain. Glu-42 contacts Mg(2+). The active site involves Asp-46. Asp-115 and Glu-118 together coordinate Mg(2+). Glu-118 is a catalytic residue. A DRBM domain is found at 156-226 (DAKTLLQEHL…AAQVLELLKK (71 aa)).

This sequence belongs to the ribonuclease III family. As to quaternary structure, homodimer. Requires Mg(2+) as cofactor.

It is found in the cytoplasm. It carries out the reaction Endonucleolytic cleavage to 5'-phosphomonoester.. In terms of biological role, digests double-stranded RNA. Involved in the processing of primary rRNA transcript to yield the immediate precursors to the large and small rRNAs (23S and 16S). Processes some mRNAs, and tRNAs when they are encoded in the rRNA operon. Processes pre-crRNA and tracrRNA of type II CRISPR loci if present in the organism. The protein is Ribonuclease 3 of Shewanella baltica (strain OS185).